The primary structure comprises 428 residues: E3 ubiquitin-protein ligase RNF128 (428 aa).

A signal peptide spans 1 to 38 (MGPPLGAGVSCRGGCGSSRLLAWCFLLALSPQAPGSRG). N-linked (GlcNAc...) asparagine glycosylation is found at Asn-48, Asn-59, and Asn-101. The PA domain occupies 75 to 183 (SPLEPVAGVL…LKGTKILQSI (109 aa)). A helical membrane pass occupies residues 208–228 (IFFVSVSFFIITAATVGYFIF). Residues 277 to 318 (CAVCIELYKPNDLVRILTCNHIFHKTCVDPWLLEHRTCPMCK) form an RING-type; atypical zinc finger. Residues 346-428 (ISNSASSHEE…QETAVREIKS (83 aa)) are disordered. Positions 416 to 428 (TPHQETAVREIKS) are enriched in basic and acidic residues.

In terms of processing, auto-ubiquitinated. Controls the development of T-cell clonal anergy by ubiquitination.

Its subcellular location is the cytoplasm. It is found in the endomembrane system. The protein resides in the cytoskeleton. The protein localises to the perinuclear region. The enzyme catalyses S-ubiquitinyl-[E2 ubiquitin-conjugating enzyme]-L-cysteine + [acceptor protein]-L-lysine = [E2 ubiquitin-conjugating enzyme]-L-cysteine + N(6)-ubiquitinyl-[acceptor protein]-L-lysine.. The protein operates within protein modification; protein ubiquitination. E3 ubiquitin-protein ligase that catalyzes 'Lys-27', 'Lys-48'- or 'Lys-63'-linked polyubiquitin chains formation and plays a role in different biological processes such as modulation of immune response, cytoskeletal dynamics or protein homeostasis. Inhibits IL2 and IL4 transcription, thereby playing an important role in the induction of the anergic phenotype, a long-term stable state of T-lymphocyte unresponsiveness to antigenic stimulation associated with the blockade of interleukin production. Ubiquitinates ARPC5 with 'Lys-48' linkages and COR1A with 'Lys-63' linkages leading to their degradation, down-regulation of these cytoskeletal components results in impaired lamellipodium formation and reduced accumulation of F-actin at the immunological synapse. Functions in the patterning of the dorsal ectoderm; sensitizes ectoderm to respond to neural-inducing signals. Plays a positive role in innate immune response by promoting 'Lys-63'-linked ubiquitination of TBK1 after RNA- or DNA-virus infection. Regulates alveolar macrophage activation and neutrophil infiltration by interacting with TLR4, targeting it for degradation, and inhibiting NF-kappa-B activation, hence decreasing pro-inflammatory cytokines. Negatively regulates the IL-3/STAT5 signaling pathway by facilitating 'Lys-27'-linked polyubiquitination of IL3RA leading to its degradation via lysosomal pathway. Directly regulates the N-glycosylation process in the endoplasmic reticulum by targeting the glycosyl-transferase RPN1 for ubiquitination and degradation. Other substrates targeted for degradation by RNF128 include transmembrane proteins CD40L, CD83 or the tetraspanin CD151. This is E3 ubiquitin-protein ligase RNF128 (RNF128) from Pongo abelii (Sumatran orangutan).